The chain runs to 159 residues: Crossover junction endodeoxyribonuclease RuvC (159 aa).

Catalysis depends on residues D7, E67, and D139. Positions 7, 67, and 139 each coordinate Mg(2+).

This sequence belongs to the RuvC family. In terms of assembly, homodimer which binds Holliday junction (HJ) DNA. The HJ becomes 2-fold symmetrical on binding to RuvC with unstacked arms; it has a different conformation from HJ DNA in complex with RuvA. In the full resolvosome a probable DNA-RuvA(4)-RuvB(12)-RuvC(2) complex forms which resolves the HJ. Mg(2+) serves as cofactor.

The protein resides in the cytoplasm. It carries out the reaction Endonucleolytic cleavage at a junction such as a reciprocal single-stranded crossover between two homologous DNA duplexes (Holliday junction).. In terms of biological role, the RuvA-RuvB-RuvC complex processes Holliday junction (HJ) DNA during genetic recombination and DNA repair. Endonuclease that resolves HJ intermediates. Cleaves cruciform DNA by making single-stranded nicks across the HJ at symmetrical positions within the homologous arms, yielding a 5'-phosphate and a 3'-hydroxyl group; requires a central core of homology in the junction. The consensus cleavage sequence is 5'-(A/T)TT(C/G)-3'. Cleavage occurs on the 3'-side of the TT dinucleotide at the point of strand exchange. HJ branch migration catalyzed by RuvA-RuvB allows RuvC to scan DNA until it finds its consensus sequence, where it cleaves and resolves the cruciform DNA. The chain is Crossover junction endodeoxyribonuclease RuvC from Orientia tsutsugamushi (strain Ikeda) (Rickettsia tsutsugamushi).